Reading from the N-terminus, the 1026-residue chain is Contactin-4 (1026 aa).

Residues 1–18 form the signal peptide; it reads MRLPWELLVLQSFILCLA. 6 consecutive Ig-like C2-type domains span residues 32–117, 122–207, 225–311, 316–400, 406–493, and 497–586; these read PSPV…AKLQ, DNFK…KVLG, PKIE…GQLT, PNWI…AELS, PDFS…GNLV, and PTRV…DRLS. Cystine bridges form between cysteine 50-cysteine 100, cysteine 144-cysteine 194, cysteine 247-cysteine 295, cysteine 337-cysteine 384, cysteine 429-cysteine 477, and cysteine 519-cysteine 576. N-linked (GlcNAc...) asparagine glycosylation is found at asparagine 65, asparagine 90, and asparagine 191. N-linked (GlcNAc...) asparagine glycosylation is found at asparagine 370, asparagine 375, and asparagine 466. Fibronectin type-III domains are found at residues 599 to 697, 702 to 799, 804 to 899, and 900 to 995; these read PPEA…TEEA, TPAN…SAEE, PPAS…TRKP, and PPSQ…ISNA. The segment at 685–710 is disordered; it reads PSRPSEKRRTEEALPEVTPANVSGGG. Residues 687-696 are compositionally biased toward basic and acidic residues; sequence RPSEKRRTEE. N-linked (GlcNAc...) asparagine glycans are attached at residues asparagine 705, asparagine 764, asparagine 858, asparagine 893, asparagine 911, asparagine 929, and asparagine 954. Over residues 886–896 the composition is skewed to polar residues; the sequence is GPSSATVNVTT. Residues 886 to 907 form a disordered region; it reads GPSSATVNVTTRKPPPSQPPGN. Serine 1000 carries GPI-anchor amidated serine lipidation. The propeptide at 1001–1026 is removed in mature form; sequence GASTSNACTLSAISTIMISLTARSSL.

This sequence belongs to the immunoglobulin superfamily. Contactin family. In terms of assembly, interacts with PTPRG. Mainly expressed in brain. Highly expressed in cerebellum and weakly expressed in corpus callosum, caudate nucleus, amygdala and spinal cord. Also expressed in testis, pancreas, thyroid, uterus, small intestine and kidney. Not expressed in skeletal muscle. Isoform 2 is weakly expressed in cerebral cortex.

The protein localises to the cell membrane. Its subcellular location is the secreted. Its function is as follows. Contactins mediate cell surface interactions during nervous system development. Has some neurite outgrowth-promoting activity. May be involved in synaptogenesis. The sequence is that of Contactin-4 (CNTN4) from Homo sapiens (Human).